A 31-amino-acid polypeptide reads, in one-letter code: Photosystem I reaction center subunit XII (31 aa).

Residues 7-26 traverse the membrane as a helical segment; the sequence is QIFIALLTALIPAFFALKLG.

Belongs to the PsaM family.

It localises to the plastid. It is found in the chloroplast thylakoid membrane. This chain is Photosystem I reaction center subunit XII, found in Euglena granulata.